We begin with the raw amino-acid sequence, 338 residues long: Ketol-acid reductoisomerase (NADP(+)) (338 aa).

The KARI N-terminal Rossmann domain occupies 1–181 (MNVYYDRDCD…GGGRTGIIET (181 aa)). Residues 24 to 27 (YGSQ), Arg-47, Ser-50, Ser-52, and 82 to 85 (DEFQ) each bind NADP(+). Residue His-107 is part of the active site. Gly-133 lines the NADP(+) pocket. In terms of domain architecture, KARI C-terminal knotted spans 182-327 (TFKDETETDL…GNLRAMMPWI (146 aa)). Mg(2+) contacts are provided by Asp-190, Glu-194, Glu-226, and Glu-230. Ser-251 serves as a coordination point for substrate.

This sequence belongs to the ketol-acid reductoisomerase family. It depends on Mg(2+) as a cofactor.

The enzyme catalyses (2R)-2,3-dihydroxy-3-methylbutanoate + NADP(+) = (2S)-2-acetolactate + NADPH + H(+). It catalyses the reaction (2R,3R)-2,3-dihydroxy-3-methylpentanoate + NADP(+) = (S)-2-ethyl-2-hydroxy-3-oxobutanoate + NADPH + H(+). Its pathway is amino-acid biosynthesis; L-isoleucine biosynthesis; L-isoleucine from 2-oxobutanoate: step 2/4. It functions in the pathway amino-acid biosynthesis; L-valine biosynthesis; L-valine from pyruvate: step 2/4. Functionally, involved in the biosynthesis of branched-chain amino acids (BCAA). Catalyzes an alkyl-migration followed by a ketol-acid reduction of (S)-2-acetolactate (S2AL) to yield (R)-2,3-dihydroxy-isovalerate. In the isomerase reaction, S2AL is rearranged via a Mg-dependent methyl migration to produce 3-hydroxy-3-methyl-2-ketobutyrate (HMKB). In the reductase reaction, this 2-ketoacid undergoes a metal-dependent reduction by NADPH to yield (R)-2,3-dihydroxy-isovalerate. The protein is Ketol-acid reductoisomerase (NADP(+)) of Trichlorobacter lovleyi (strain ATCC BAA-1151 / DSM 17278 / SZ) (Geobacter lovleyi).